Reading from the N-terminus, the 184-residue chain is UPF0302 protein OB1778 (184 aa).

This sequence belongs to the UPF0302 family.

This Oceanobacillus iheyensis (strain DSM 14371 / CIP 107618 / JCM 11309 / KCTC 3954 / HTE831) protein is UPF0302 protein OB1778.